A 171-amino-acid chain; its full sequence is uncharacterized protein (171 aa).

2 disordered regions span residues 68-112 (NKNN…DQPY) and 152-171 (LPEK…SIKN). The span at 161 to 171 (DDEDDMFSIKN) shows a compositional bias: acidic residues.

The protein belongs to the asfivirus H171R family.

The protein resides in the virion. This is an uncharacterized protein from African swine fever virus (strain Badajoz 1971 Vero-adapted) (Ba71V).